The primary structure comprises 842 residues: Protein translocase subunit SecA (842 aa).

ATP contacts are provided by residues glutamine 85, 103 to 107, and aspartate 493; that span reads GEGKT. 4 residues coordinate Zn(2+): cysteine 825, cysteine 827, cysteine 836, and histidine 837.

Belongs to the SecA family. As to quaternary structure, monomer and homodimer. Part of the essential Sec protein translocation apparatus which comprises SecA, SecYEG and auxiliary proteins SecDF. Other proteins may also be involved. It depends on Zn(2+) as a cofactor.

It is found in the cell membrane. Its subcellular location is the cytoplasm. The enzyme catalyses ATP + H2O + cellular proteinSide 1 = ADP + phosphate + cellular proteinSide 2.. In terms of biological role, part of the Sec protein translocase complex. Interacts with the SecYEG preprotein conducting channel. Has a central role in coupling the hydrolysis of ATP to the transfer of proteins into and across the cell membrane, serving as an ATP-driven molecular motor driving the stepwise translocation of polypeptide chains across the membrane. In Streptococcus equi subsp. zooepidemicus (strain MGCS10565), this protein is Protein translocase subunit SecA.